We begin with the raw amino-acid sequence, 267 residues long: Serine/threonine-protein kinase 1 (267 aa).

The region spanning 18-266 is the Protein kinase domain; sequence IQNNVRLVDG…YETVIKHSFL (249 aa). ATP is bound by residues 24–32 and Lys47; that span reads LVDGKFGKM. Asp134 acts as the Proton acceptor in catalysis.

The protein belongs to the protein kinase superfamily. Ser/Thr protein kinase family.

The catalysed reaction is L-seryl-[protein] + ATP = O-phospho-L-seryl-[protein] + ADP + H(+). The enzyme catalyses L-threonyl-[protein] + ATP = O-phospho-L-threonyl-[protein] + ADP + H(+). This is Serine/threonine-protein kinase 1 (PK1) from Heliothis zea nuclear polyhedrosis virus (HzSNPV).